The following is a 318-amino-acid chain: Ferrochelatase (318 aa).

Fe cation contacts are provided by His186 and Glu264.

This sequence belongs to the ferrochelatase family.

It localises to the cytoplasm. The enzyme catalyses heme b + 2 H(+) = protoporphyrin IX + Fe(2+). The protein operates within porphyrin-containing compound metabolism; protoheme biosynthesis; protoheme from protoporphyrin-IX: step 1/1. In terms of biological role, catalyzes the ferrous insertion into protoporphyrin IX. The protein is Ferrochelatase of Chlamydia caviae (strain ATCC VR-813 / DSM 19441 / 03DC25 / GPIC) (Chlamydophila caviae).